Reading from the N-terminus, the 191-residue chain is Crossover junction endodeoxyribonuclease RuvC (191 aa).

Active-site residues include Asp7, Glu67, and Asp140. 3 residues coordinate Mg(2+): Asp7, Glu67, and Asp140.

The protein belongs to the RuvC family. In terms of assembly, homodimer which binds Holliday junction (HJ) DNA. The HJ becomes 2-fold symmetrical on binding to RuvC with unstacked arms; it has a different conformation from HJ DNA in complex with RuvA. In the full resolvosome a probable DNA-RuvA(4)-RuvB(12)-RuvC(2) complex forms which resolves the HJ. Requires Mg(2+) as cofactor.

The protein localises to the cytoplasm. The enzyme catalyses Endonucleolytic cleavage at a junction such as a reciprocal single-stranded crossover between two homologous DNA duplexes (Holliday junction).. Functionally, the RuvA-RuvB-RuvC complex processes Holliday junction (HJ) DNA during genetic recombination and DNA repair. Endonuclease that resolves HJ intermediates. Cleaves cruciform DNA by making single-stranded nicks across the HJ at symmetrical positions within the homologous arms, yielding a 5'-phosphate and a 3'-hydroxyl group; requires a central core of homology in the junction. The consensus cleavage sequence is 5'-(A/T)TT(C/G)-3'. Cleavage occurs on the 3'-side of the TT dinucleotide at the point of strand exchange. HJ branch migration catalyzed by RuvA-RuvB allows RuvC to scan DNA until it finds its consensus sequence, where it cleaves and resolves the cruciform DNA. The sequence is that of Crossover junction endodeoxyribonuclease RuvC from Pelodictyon phaeoclathratiforme (strain DSM 5477 / BU-1).